A 674-amino-acid polypeptide reads, in one-letter code: Penicillin-binding protein activator LpoA (674 aa).

A signal peptide spans 1–31 (MLSSTFVRTKAGRSKPVRLTAVIAAALFLAG). Residue Cys-32 is the site of N-palmitoyl cysteine attachment. A lipid anchor (S-diacylglycerol cysteine) is attached at Cys-32. The tract at residues 291-349 (GVTPSTPVQQQQPASVPEQAAQPASTDPNANGAVSTSAPDAAPVTAAQPSAPSTAPITP) is disordered. The span at 292 to 315 (VTPSTPVQQQQPASVPEQAAQPAS) shows a compositional bias: low complexity. Positions 316–328 (TDPNANGAVSTSA) are enriched in polar residues. Low complexity predominate over residues 331-349 (AAPVTAAQPSAPSTAPITP).

This sequence belongs to the LpoA family. As to quaternary structure, interacts with PBP1a.

It localises to the cell outer membrane. Regulator of peptidoglycan synthesis that is essential for the function of penicillin-binding protein 1A (PBP1a). The protein is Penicillin-binding protein activator LpoA of Serratia proteamaculans (strain 568).